Consider the following 905-residue polypeptide: DNA gyrase subunit A (905 aa).

Positions 35–524 (IPDVRDGLKP…GEFDQDIEDL (490 aa)) constitute a Topo IIA-type catalytic domain. Residue Tyr-123 is the O-(5'-phospho-DNA)-tyrosine intermediate of the active site. Positions 551–557 (QKRGGKG) match the GyrA-box motif. The tract at residues 882–905 (IAESSDDNEEDSEFEEEVAEEGSE) is disordered. The segment covering 885-905 (SSDDNEEDSEFEEEVAEEGSE) has biased composition (acidic residues).

The protein belongs to the type II topoisomerase GyrA/ParC subunit family. As to quaternary structure, heterotetramer, composed of two GyrA and two GyrB chains. In the heterotetramer, GyrA contains the active site tyrosine that forms a transient covalent intermediate with DNA, while GyrB binds cofactors and catalyzes ATP hydrolysis.

It is found in the cytoplasm. The enzyme catalyses ATP-dependent breakage, passage and rejoining of double-stranded DNA.. Functionally, a type II topoisomerase that negatively supercoils closed circular double-stranded (ds) DNA in an ATP-dependent manner to modulate DNA topology and maintain chromosomes in an underwound state. Negative supercoiling favors strand separation, and DNA replication, transcription, recombination and repair, all of which involve strand separation. Also able to catalyze the interconversion of other topological isomers of dsDNA rings, including catenanes and knotted rings. Type II topoisomerases break and join 2 DNA strands simultaneously in an ATP-dependent manner. In Rickettsia bellii (strain RML369-C), this protein is DNA gyrase subunit A.